Reading from the N-terminus, the 382-residue chain is E3 ubiquitin-protein ligase RNF133 (382 aa).

The 103-residue stretch at 65–167 folds into the PA domain; it reads SSILKRVAGV…IKGMEILHLI (103 aa). A helical transmembrane segment spans residues 190-210; the sequence is YFVSFMIVTTATLAYFTFYHI. An RING-type; atypical zinc finger spans residues 256–297; the sequence is CVICFEAYKPNEIVRILTCKHFFHKNCIDPWILAHGTCPMCK. The segment at 328 to 382 is disordered; it reads TLSPVEEETNYELPPARTSSKVTHVQEHPTSSANAGSQPPEAEETSHPSHGQQVL. Residues 344 to 364 show a composition bias toward polar residues; that stretch reads RTSSKVTHVQEHPTSSANAGS.

As to quaternary structure, interacts with E3 ligase UBE2J1. Post-translationally, auto-ubiquitinated. As to expression, expression is testis-specific.

It is found in the endoplasmic reticulum membrane. It catalyses the reaction S-ubiquitinyl-[E2 ubiquitin-conjugating enzyme]-L-cysteine + [acceptor protein]-L-lysine = [E2 ubiquitin-conjugating enzyme]-L-cysteine + N(6)-ubiquitinyl-[acceptor protein]-L-lysine.. It participates in protein modification; protein ubiquitination. Has E3 ubiquitin-protein ligase activity. Plays a role in male fecundity through the interaction with the E2 ubituitin-protein ligase UBE2J1. In Mus musculus (Mouse), this protein is E3 ubiquitin-protein ligase RNF133 (Rnf133).